Consider the following 119-residue polypeptide: V-type proton ATPase subunit F (119 aa).

The protein belongs to the V-ATPase F subunit family. V-ATPase is a heteromultimeric enzyme composed of a peripheral catalytic V1 complex (components A to H) attached to an integral membrane V0 proton pore complex (components: a, c, c', c'', d, e, f and VOA1).

Its subcellular location is the vacuole membrane. Its function is as follows. Subunit of the V1 complex of vacuolar(H+)-ATPase (V-ATPase), a multisubunit enzyme composed of a peripheral complex (V1) that hydrolyzes ATP and a membrane integral complex (V0) that translocates protons. V-ATPase is responsible for acidifying and maintaining the pH of intracellular compartments. The protein is V-type proton ATPase subunit F (VMA7) of Vanderwaltozyma polyspora (strain ATCC 22028 / DSM 70294 / BCRC 21397 / CBS 2163 / NBRC 10782 / NRRL Y-8283 / UCD 57-17) (Kluyveromyces polysporus).